The following is a 162-amino-acid chain: NADH-quinone oxidoreductase subunit I (162 aa).

4Fe-4S ferredoxin-type domains are found at residues 52 to 82 (LRRY…IEAG) and 93 to 122 (TRYD…EGPN). The [4Fe-4S] cluster site is built by Cys-62, Cys-65, Cys-68, Cys-72, Cys-102, Cys-105, Cys-108, and Cys-112.

This sequence belongs to the complex I 23 kDa subunit family. In terms of assembly, NDH-1 is composed of 14 different subunits. Subunits NuoA, H, J, K, L, M, N constitute the membrane sector of the complex. [4Fe-4S] cluster serves as cofactor.

The protein localises to the cell inner membrane. It carries out the reaction a quinone + NADH + 5 H(+)(in) = a quinol + NAD(+) + 4 H(+)(out). In terms of biological role, NDH-1 shuttles electrons from NADH, via FMN and iron-sulfur (Fe-S) centers, to quinones in the respiratory chain. The immediate electron acceptor for the enzyme in this species is believed to be ubiquinone. Couples the redox reaction to proton translocation (for every two electrons transferred, four hydrogen ions are translocated across the cytoplasmic membrane), and thus conserves the redox energy in a proton gradient. The sequence is that of NADH-quinone oxidoreductase subunit I from Methylobacterium sp. (strain 4-46).